Consider the following 429-residue polypeptide: UDP-N-acetylglucosamine 1-carboxyvinyltransferase (429 aa).

22-23 (KN) lines the phosphoenolpyruvate pocket. R102 is a binding site for UDP-N-acetyl-alpha-D-glucosamine. C126 (proton donor) is an active-site residue. Residue C126 is modified to 2-(S-cysteinyl)pyruvic acid O-phosphothioketal. Residues 131–135 (RPVDL), D316, and I338 contribute to the UDP-N-acetyl-alpha-D-glucosamine site.

Belongs to the EPSP synthase family. MurA subfamily.

It localises to the cytoplasm. It carries out the reaction phosphoenolpyruvate + UDP-N-acetyl-alpha-D-glucosamine = UDP-N-acetyl-3-O-(1-carboxyvinyl)-alpha-D-glucosamine + phosphate. The protein operates within cell wall biogenesis; peptidoglycan biosynthesis. Functionally, cell wall formation. Adds enolpyruvyl to UDP-N-acetylglucosamine. The protein is UDP-N-acetylglucosamine 1-carboxyvinyltransferase of Nitrobacter winogradskyi (strain ATCC 25391 / DSM 10237 / CIP 104748 / NCIMB 11846 / Nb-255).